The following is a 519-amino-acid chain: NADH-quinone oxidoreductase subunit N (519 aa).

14 helical membrane-spanning segments follow: residues 22–42 (LLPM…EAFV), 53–73 (VLAL…TGLP), 87–107 (PTLF…LLIA), 141–161 (TEVF…PAAN), 163–183 (LITA…LAGM), 198–218 (YFLL…LVYG), 242–262 (IIVG…GVPF), 287–307 (VAAF…LAWD), 310–330 (PVIW…GITQ), 336–356 (LLAY…AATT), 363–383 (VLFY…IVIL), 406–426 (LVAG…PTSG), 442–461 (AGPL…YYYL), and 483–503 (GALA…LGIV).

The protein belongs to the complex I subunit 2 family. In terms of assembly, NDH-1 is composed of 14 different subunits. Subunits NuoA, H, J, K, L, M, N constitute the membrane sector of the complex.

The protein resides in the cell membrane. It catalyses the reaction a quinone + NADH + 5 H(+)(in) = a quinol + NAD(+) + 4 H(+)(out). In terms of biological role, NDH-1 shuttles electrons from NADH, via FMN and iron-sulfur (Fe-S) centers, to quinones in the respiratory chain. The immediate electron acceptor for the enzyme in this species is believed to be a menaquinone. Couples the redox reaction to proton translocation (for every two electrons transferred, four hydrogen ions are translocated across the cytoplasmic membrane), and thus conserves the redox energy in a proton gradient. In Acidothermus cellulolyticus (strain ATCC 43068 / DSM 8971 / 11B), this protein is NADH-quinone oxidoreductase subunit N.